Here is a 2286-residue protein sequence, read N- to C-terminus: Unconventional myosin-IXAb (2286 aa).

The 99-residue stretch at 16-114 folds into the Ras-associating domain; the sequence is SEFTLRVYPG…YRFLLREKNL (99 aa). One can recognise a Myosin motor domain in the interval 148-971; sequence AQFVADLCSL…LRQRLQDELH (824 aa). The chain crosses the membrane as a helical span at residues 178 to 198; sequence IYTYVGSILIAVNPFKFLPIY. An ATP-binding site is contributed by 242-249; sequence GESGSGKT. Positions 853–875 are actin-binding; that stretch reads LNKLMETLGQSEPYFVKCIRSNA. 4 IQ domains span residues 976-996, 1025-1054, 1066-1095, and 1089-1118; these read RRIV…HFCR, QQGA…AVLI, RNTA…AAVT, and QRRA…QQCR. The tract at residues 976–1113 is neck or regulatory domain; sequence RRIVCLQRSF…QSRQRCRILR (138 aa). Residues 1114-2254 form a tail region; the sequence is EQQCREQSKH…PRANRSCPPK (1141 aa). Disordered stretches follow at residues 1118–1279, 1308–1341, 1455–1588, and 1732–1754; these read REQS…QIRE, DVPL…FSVS, CEED…EPML, and DGTI…SDTV. Over residues 1123 to 1133 the composition is skewed to polar residues; the sequence is HPSTVTKSLHQ. Residues 1134–1149 show a composition bias toward basic and acidic residues; it reads NTEEAEKLEEVWEKQT. The segment covering 1263 to 1273 has biased composition (polar residues); that stretch reads PINSAPQTPNR. The segment covering 1455-1465 has biased composition (acidic residues); sequence CEEDEDDEYED. The segment covering 1485-1501 has biased composition (basic and acidic residues); the sequence is CVFHSDSEMSSQKEQKR. The segment covering 1529–1542 has biased composition (basic residues); the sequence is RGKMRFWSKSKHGD. Composition is skewed to basic and acidic residues over residues 1550–1562 and 1572–1585; these read RSAD…RRND and GVSE…ENRE. The Phorbol-ester/DAG-type zinc-finger motif lies at 1759-1808; that stretch reads GHIFKSTQYSIPTYCEFCSSLIWMMDKACVCKLCRYACHKKCCLRMTTKC. The Rho-GAP domain occupies 1823–2011; it reads VELSRLTSDE…LIICEQMRKY (189 aa). A compositionally biased stretch (basic residues) spans 2032-2049; the sequence is LTHIRRSMGKSRARKSGH. Disordered regions lie at residues 2032–2087 and 2113–2286; these read LTHI…QQEE and PRAS…EFMV. Positions 2080 to 2107 form a coiled coil; sequence QAAMQQEEKVLTQQIENLQKEKEELTYE. Composition is skewed to low complexity over residues 2176 to 2192 and 2200 to 2211; these read SLDS…SVSS and SSSSGPLFSSSS. Positions 2226-2238 are enriched in polar residues; sequence EQASLSARCASSS. Residues 2254 to 2270 show a composition bias toward basic and acidic residues; the sequence is KPREPGDTGGRRREHEF.

Belongs to the TRAFAC class myosin-kinesin ATPase superfamily. Myosin family.

It is found in the membrane. The protein resides in the cytoplasm. It localises to the synapse. Its subcellular location is the cell projection. The protein localises to the growth cone. Myosins are actin-based motor molecules with ATPase activity. Unconventional myosins serve in intracellular movements. Regulates Rho by stimulating it's GTPase activity in neurons. Required for the regulation of neurite branching and motor neuron axon guidance. This is Unconventional myosin-IXAb (myo9ab) from Danio rerio (Zebrafish).